Reading from the N-terminus, the 69-residue chain is MYKITATIEKEGGTPTNWTRYSKSKLTKSECEKMLSGKKEAGVSREQKVKLINFNCEKLQSSRIALYSN.

In terms of biological role, helps to maintain the integrity of the chromosome by lowering the steady-state level of double strand breaks. This region of DNA acts as an antitoxin to toxin RalR, a DNase, but it seems to be sRNA RalA that has the antitoxin activity and not this putative protein. Therefore the identity of this as a protein-coding gene has been cast into doubt. The sequence is that of Double-strand break reduction protein from Escherichia coli (strain K12).